Here is a 471-residue protein sequence, read N- to C-terminus: ATP synthase subunit beta (471 aa).

153-160 (GGAGVGKT) is a binding site for ATP.

Belongs to the ATPase alpha/beta chains family. F-type ATPases have 2 components, CF(1) - the catalytic core - and CF(0) - the membrane proton channel. CF(1) has five subunits: alpha(3), beta(3), gamma(1), delta(1), epsilon(1). CF(0) has four main subunits: a(1), b(1), b'(1) and c(9-12).

The protein localises to the cell membrane. The enzyme catalyses ATP + H2O + 4 H(+)(in) = ADP + phosphate + 5 H(+)(out). Functionally, produces ATP from ADP in the presence of a proton gradient across the membrane. The catalytic sites are hosted primarily by the beta subunits. This chain is ATP synthase subunit beta, found in Roseiflexus castenholzii (strain DSM 13941 / HLO8).